Here is a 994-residue protein sequence, read N- to C-terminus: MEAAHSKSTEECLSYFGVSETTGLTPDQVKRHLEKYGPNELPAEEGKSLWELVVEQFEDLLVRILLLAACISFVLAWFEEGEETVTAFVEPFVILLILIANAIVGVWQERNAENAIEALKEYEPEMGKVYRADRKSVQRIKARDIVPGDIVEVAVGDKVPADIRILSIKSTTLRVDQSILTGESVSVIKHTDPVPDPRAVNQDKKNMLFSGTNIAAGKAVGIVATTGVSTEIGKIRDQMAATEQDKTPLQQKLDEFGEQLSKVISLICVAVWLINIGHFNDPVHGGSWFRGAIYYFKIAVALAVAAIPEGLPAVITTCLALGTRRMAKKNAIVRSLPSVETLGCTSVICSDKTGTLTTNQMSVCKMFIIDKVDGDVCSLNEFSITGSTYAPEGEVLKNDKPVRAGQYDGLVELATICALCNDSSLDFNETKGVYEKVGEATETALTTLVEKMNVFNTEVRSLSKVERANACNSVIRQLMKKEFTLEFSRDRKSMSVYCSPAKSSRAAVGNKMFVKGAPEGVIDRCNYVRVGTTRVPLTGPVKEKIMSVIKEWGTGRDTLRCLALATRDTPPKREEMVLDDSAKFMEYEMDLTFVGVVGMLDPPRKEVTGSIQLCRDAGIRVIMITGDNKGTAIAICRRIGIFSENEEVTDRAYTGREFDDLPLAEQREACRRACCFARVEPSHKSKIVEYLQSYDEITAMTGDGVNDAPALKKAEIGIAMGSGTAVAKTASEMVLADDNFSTIVAAVEEGRAIYNNMKQFIRYLISSNVGEVVCIFLTAALGLPEALIPVQLLWVNLVTDGLPATALGFNPPDLDIMDRPPRSPKEPLISGWLFFRYMAIGGYVGAATVGAAAWWFLYAEDGPHVSYHQLTHFMQCTEHNPEFDGLDCEVFEAPEPMTMALSVLVTIEMCNALNSLSENQSLLRMPPWVNIWLLGSICLSMSLHFLILYVDPLPMIFKLRALDFTQWLMVLKISLPVIGLDELLKFIARNYLEG.

At 1 to 48 the chain is on the cytoplasmic side; it reads MEAAHSKSTEECLSYFGVSETTGLTPDQVKRHLEKYGPNELPAEEGKS. Residues 49-69 traverse the membrane as a helical segment; sequence LWELVVEQFEDLLVRILLLAA. Residues 70-89 lie on the Lumenal side of the membrane; that stretch reads CISFVLAWFEEGEETVTAFV. The chain crosses the membrane as a helical span at residues 90–110; the sequence is EPFVILLILIANAIVGVWQER. Over 111 to 253 the chain is Cytoplasmic; sequence NAENAIEALK…QDKTPLQQKL (143 aa). Residues 254-273 traverse the membrane as a helical segment; the sequence is DEFGEQLSKVISLICVAVWL. The Lumenal segment spans residues 274–295; sequence INIGHFNDPVHGGSWFRGAIYY. Residues 296–313 form a helical membrane-spanning segment; sequence FKIAVALAVAAIPEGLPA. The Ca(2+) site is built by V304, A305, I307, and E309. Topologically, residues 314–757 are cytoplasmic; the sequence is VITTCLALGT…EEGRAIYNNM (444 aa). D351 functions as the 4-aspartylphosphate intermediate in the catalytic mechanism. Mg(2+)-binding residues include D351 and T353. Residue T353 coordinates ATP. T441 bears the Phosphothreonine mark. The ATP site is built by E442, R489, K515, and R560. T569 carries the phosphothreonine modification. Residue S581 is modified to Phosphoserine. 3 residues coordinate ATP: T625, G626, and D627. S643 carries the post-translational modification Phosphoserine. ATP is bound by residues R678 and K684. D703 provides a ligand contact to Mg(2+). N706 contributes to the ATP binding site. Residues 758 to 777 traverse the membrane as a helical segment; it reads KQFIRYLISSNVGEVVCIFL. Residues N768 and E771 each coordinate Ca(2+). The Lumenal segment spans residues 778 to 787; sequence TAALGLPEAL. The helical transmembrane segment at 788–808 threads the bilayer; that stretch reads IPVQLLWVNLVTDGLPATALG. The interval 788–808 is interaction with PLN; that stretch reads IPVQLLWVNLVTDGLPATALG. 3 residues coordinate Ca(2+): N796, T799, and D800. Topologically, residues 809-828 are cytoplasmic; that stretch reads FNPPDLDIMDRPPRSPKEPL. A helical membrane pass occupies residues 829–851; the sequence is ISGWLFFRYMAIGGYVGAATVGA. Over 852 to 897 the chain is Lumenal; the sequence is AAWWFLYAEDGPHVSYHQLTHFMQCTEHNPEFDGLDCEVFEAPEPM. Cysteines 876 and 888 form a disulfide. The helical transmembrane segment at 898-917 threads the bilayer; the sequence is TMALSVLVTIEMCNALNSLS. Ca(2+) is bound at residue E908. Residues 918-930 lie on the Cytoplasmic side of the membrane; it reads ENQSLLRMPPWVN. The chain crosses the membrane as a helical span at residues 931-949; that stretch reads IWLLGSICLSMSLHFLILY. The interaction with PLN stretch occupies residues 932 to 943; the sequence is WLLGSICLSMSL. Over 950–964 the chain is Lumenal; it reads VDPLPMIFKLRALDF. A helical transmembrane segment spans residues 965 to 985; that stretch reads TQWLMVLKISLPVIGLDELLK. Topologically, residues 986–994 are cytoplasmic; sequence FIARNYLEG.

Belongs to the cation transport ATPase (P-type) (TC 3.A.3) family. Type IIA subfamily. Interacts with sarcolipin (SLN). Interacts with phospholamban (PLN). Interacts with myoregulin (MRLN). Interacts with DWORF. Interacts with VMP1. It depends on Mg(2+) as a cofactor.

It is found in the endoplasmic reticulum membrane. The protein resides in the sarcoplasmic reticulum membrane. It catalyses the reaction Ca(2+)(in) + ATP + H2O = Ca(2+)(out) + ADP + phosphate + H(+). Inhibited by sarcolipin (SLN) and myoregulin (MRLN). Has also been shown to be reversibly inhibited by phospholamban (PLN) at low calcium concentrations in vitro. Dephosphorylated PLN decreases the apparent affinity of the ATPase for calcium in vitro and this inhibition is regulated by the phosphorylation of PLN. Enhanced by DWORF; DWORF increases activity by displacing sarcolipin (SLN), phospholamban (PLN) and myoregulin (MRLN). In terms of biological role, key regulator of striated muscle performance by acting as the major Ca(2+) ATPase responsible for the reuptake of cytosolic Ca(2+) into the sarcoplasmic reticulum. Catalyzes the hydrolysis of ATP coupled with the translocation of calcium from the cytosol to the sarcoplasmic reticulum lumen. Contributes to calcium sequestration involved in muscular excitation/contraction. The chain is Sarcoplasmic/endoplasmic reticulum calcium ATPase 1 (Atp2a1) from Mus musculus (Mouse).